The chain runs to 92 residues: Large ribosomal subunit protein uL23 (92 aa).

Belongs to the universal ribosomal protein uL23 family. As to quaternary structure, part of the 50S ribosomal subunit. Contacts protein L29, and trigger factor when it is bound to the ribosome.

One of the early assembly proteins it binds 23S rRNA. One of the proteins that surrounds the polypeptide exit tunnel on the outside of the ribosome. Forms the main docking site for trigger factor binding to the ribosome. The chain is Large ribosomal subunit protein uL23 from Bdellovibrio bacteriovorus (strain ATCC 15356 / DSM 50701 / NCIMB 9529 / HD100).